Reading from the N-terminus, the 335-residue chain is Leukocyte immunoglobulin-like receptor subfamily B member 4A (335 aa).

The first 23 residues, 1 to 23 (MIAMLTVLLYLGLILEPRTAVQA), serve as a signal peptide directing secretion. At 24–238 (GHLPKPIIWA…TEDGLETYQK (215 aa)) the chain is on the extracellular side. 2 Ig-like C2-type domains span residues 42–125 (YTSV…ENPS) and 124–212 (PSLS…KPSN). The cysteines at positions 49 and 98 are disulfide-linked. Residues Asn133 and Asn191 are each glycosylated (N-linked (GlcNAc...) asparagine). Cys144 and Cys196 are oxidised to a cystine. The chain crosses the membrane as a helical span at residues 239–260 (ILIGVLVSFLLLFFLLLFLILI). Topologically, residues 261–335 (GYQYGHKKKA…CIRTQEQNNS (75 aa)) are cytoplasmic. Short sequence motifs (ITIM motif) lie at residues 298 to 303 (IVYAQV) and 320 to 325 (VTYAQL).

As to quaternary structure, interacts (when tyrosine phosphorylated) with SH2 domain-containing phosphatases PTPN6/SHP-1 and PTPN11/SHP-2; interaction with PTPN6 enhances inhibition of mast cell activation. In terms of processing, tyrosine phosphorylated. As to expression, expressed on mast cells and natural killer cells (at protein level). Expressed on neutrophils (at protein level). Expressed on eosinophils (at protein level). Expressed on dendritic cells (at protein level). Expressed on memory and marginal zone B cells (at protein level). Expressed on CD8 T cells (at protein level). Expressed in the uterus of pregnant mice where it is detected at day 4.0 of pregnancy with levels dropping at day 4.5. Highly expressed in the luminal epithelium of uterine endometrium with lower levels in the glandular epithelium.

The protein localises to the cell membrane. Functionally, inhibitory receptor involved in the down-regulation of the immune response. Receptor for FN1. Receptor for integrin ITGAV/ITGB3. Inhibits IgE-mediated mast cell activation, at least in part through interaction with ITGAV/ITGB3. Also inhibits KITLG/SCF-mediated mast cell activation. Through interaction with ITGAV/ITGB3, inhibits antibody production by memory and marginal zone B cells, probably by suppressing their differentiation into plasma cells. Inhibits IFNG production by CD8 T cells, CD4 T cells and natural killer cells. Inhibits antigen presentation by dendritic cells to T cells, preventing T cell activation. Inhibits lipopolysaccharide-mediated neutrophil-dependent vascular injury. Suppresses the allergic inflammatory response by inhibiting infiltration of neutrophils and eosinophils and preventing mast cell degranulation. Inhibits lysis by natural killer cells. The chain is Leukocyte immunoglobulin-like receptor subfamily B member 4A from Mus musculus (Mouse).